We begin with the raw amino-acid sequence, 638 residues long: MTYALLKKIDAPADLRKLDRRELRTLADELRAYVLESVSQTGGHLSSNLGTVELTIALHYVFHTPDDRVVWDVGHQSYPHKILTGRRERMNTLRQFGGISGFPRRSESQYDTFGTAHSSTSISAALGMALGARTLGEQRVSIAVIGDGAMTAGMAFEALNNAGVYKDLPLVVVLNDNDMSISPPVGALNKHLARLLSGQFYAATKKGIEKVLSVAPPVLEFAKRFEEHAKGMMVPATLFEEFGFNYIGPIDGHDLDSLVPTLQNIRKRALEGAGPQFLHVVTKKGQGYKLAEADPILYHGPGKFNPAEGIRPAAKPARKTYTQVFGEWLCDMAAADKRLIGITPAMREGSGMVEFEKRFPERYYDVGIAEQHAVTFAGGMACEGLKPIVAIYSTFLQRGYDQLIHDVALQNLPVVFALDRAGLVGADGATHAGAYDIAYLRCIPNMMVMTPSDENECRQLLTTAFHQNCPTAVRYPRGAGQGVATEAVLKDVPVGKGVMRRTGGARSGQRVAFLGFGSMVHPALGAAQALDASVADMRFVKPLDVELVKRLAEEHNYLVTVEEGSVMGGAGSAVLEALAEAGIDIPVLVLGLPDRFIDHGDPALLLSQCGLDAAGIERSVRERFGIGQAPVAVASRVA.

Residues His-75 and 116 to 118 (AHS) each bind thiamine diphosphate. Position 147 (Asp-147) interacts with Mg(2+). Thiamine diphosphate is bound by residues 148–149 (GA), Asn-177, Tyr-288, and Glu-370. Asn-177 lines the Mg(2+) pocket.

The protein belongs to the transketolase family. DXPS subfamily. In terms of assembly, homodimer. Mg(2+) serves as cofactor. Thiamine diphosphate is required as a cofactor.

It catalyses the reaction D-glyceraldehyde 3-phosphate + pyruvate + H(+) = 1-deoxy-D-xylulose 5-phosphate + CO2. Its pathway is metabolic intermediate biosynthesis; 1-deoxy-D-xylulose 5-phosphate biosynthesis; 1-deoxy-D-xylulose 5-phosphate from D-glyceraldehyde 3-phosphate and pyruvate: step 1/1. Its function is as follows. Catalyzes the acyloin condensation reaction between C atoms 2 and 3 of pyruvate and glyceraldehyde 3-phosphate to yield 1-deoxy-D-xylulose-5-phosphate (DXP). The protein is 1-deoxy-D-xylulose-5-phosphate synthase of Cupriavidus pinatubonensis (strain JMP 134 / LMG 1197) (Cupriavidus necator (strain JMP 134)).